The sequence spans 262 residues: Type II pantothenate kinase (262 aa).

7 to 14 (DAGGSLVK) is a binding site for ATP. Glu71 functions as the Proton acceptor in the catalytic mechanism. ATP contacts are provided by residues Thr101, 119-123 (GGLLT), and Tyr135.

This sequence belongs to the type II pantothenate kinase family. As to quaternary structure, homodimer.

It is found in the cytoplasm. It carries out the reaction (R)-pantothenate + ATP = (R)-4'-phosphopantothenate + ADP + H(+). Its pathway is cofactor biosynthesis; coenzyme A biosynthesis; CoA from (R)-pantothenate: step 1/5. Its function is as follows. Catalyzes the phosphorylation of pantothenate (Pan), the first step in CoA biosynthesis. The protein is Type II pantothenate kinase of Oceanobacillus iheyensis (strain DSM 14371 / CIP 107618 / JCM 11309 / KCTC 3954 / HTE831).